A 376-amino-acid polypeptide reads, in one-letter code: Queuine tRNA-ribosyltransferase (376 aa).

Asp89 serves as the catalytic Proton acceptor. Residues 89 to 93 (DSGGF), Asp143, Gln194, and Gly221 contribute to the substrate site. The RNA binding stretch occupies residues 252 to 258 (GVGTPAN). Catalysis depends on Asp271, which acts as the Nucleophile. Positions 309, 311, 314, and 340 each coordinate Zn(2+).

Belongs to the queuine tRNA-ribosyltransferase family. As to quaternary structure, homodimer. Within each dimer, one monomer is responsible for RNA recognition and catalysis, while the other monomer binds to the replacement base PreQ1. It depends on Zn(2+) as a cofactor.

It catalyses the reaction 7-aminomethyl-7-carbaguanine + guanosine(34) in tRNA = 7-aminomethyl-7-carbaguanosine(34) in tRNA + guanine. The protein operates within tRNA modification; tRNA-queuosine biosynthesis. In terms of biological role, catalyzes the base-exchange of a guanine (G) residue with the queuine precursor 7-aminomethyl-7-deazaguanine (PreQ1) at position 34 (anticodon wobble position) in tRNAs with GU(N) anticodons (tRNA-Asp, -Asn, -His and -Tyr). Catalysis occurs through a double-displacement mechanism. The nucleophile active site attacks the C1' of nucleotide 34 to detach the guanine base from the RNA, forming a covalent enzyme-RNA intermediate. The proton acceptor active site deprotonates the incoming PreQ1, allowing a nucleophilic attack on the C1' of the ribose to form the product. After dissociation, two additional enzymatic reactions on the tRNA convert PreQ1 to queuine (Q), resulting in the hypermodified nucleoside queuosine (7-(((4,5-cis-dihydroxy-2-cyclopenten-1-yl)amino)methyl)-7-deazaguanosine). This chain is Queuine tRNA-ribosyltransferase, found in Clostridium kluyveri (strain NBRC 12016).